A 271-amino-acid polypeptide reads, in one-letter code: MKSYQPKSLLNDLQYYITPPHDCSYLDNKSARMVFLDPIHRIDVVTLSELSRVGFRRSGDFVYRPECHLCRQCLSCRVPVHDFNMNSLQKKAWKRNQDLRMSIVPTHAATSVHYQLYERYINERHADGDMFPPSLDQFEKFLVHSCTESFFLELWKDDRLICVSTCDLMDDGLSAVYTFFDPDENRRSLGVFAILKQLEYVKSIDLDYLYLGYWVPHSQKMNYKSQYIPLELLLDGQWRRLNRALSQEEISQLGESLMTILPSEWNSMIIK.

Belongs to the R-transferase family. Bpt subfamily.

It is found in the cytoplasm. The catalysed reaction is N-terminal L-glutamyl-[protein] + L-leucyl-tRNA(Leu) = N-terminal L-leucyl-L-glutamyl-[protein] + tRNA(Leu) + H(+). It carries out the reaction N-terminal L-aspartyl-[protein] + L-leucyl-tRNA(Leu) = N-terminal L-leucyl-L-aspartyl-[protein] + tRNA(Leu) + H(+). Its function is as follows. Functions in the N-end rule pathway of protein degradation where it conjugates Leu from its aminoacyl-tRNA to the N-termini of proteins containing an N-terminal aspartate or glutamate. This Acinetobacter baylyi (strain ATCC 33305 / BD413 / ADP1) protein is Aspartate/glutamate leucyltransferase.